Here is a 704-residue protein sequence, read N- to C-terminus: Acetate--CoA ligase [ADP-forming] (704 aa).

In the N-terminal section; belongs to the acetate CoA ligase alpha subunit family. It in the C-terminal section; belongs to the acetate CoA ligase beta subunit family. Homodimer.

The catalysed reaction is acetate + ATP + CoA = acetyl-CoA + ADP + phosphate. Its function is as follows. Catalyzes the formation of acetate and ATP from acetyl-CoA by using ADP and phosphate. Can also use butyryl-CoA, but not phenylacetyl-CoA. Cannot catalyze the reverse reaction. In Methanocaldococcus jannaschii (strain ATCC 43067 / DSM 2661 / JAL-1 / JCM 10045 / NBRC 100440) (Methanococcus jannaschii), this protein is Acetate--CoA ligase [ADP-forming].